The following is a 190-amino-acid chain: Nucleoside triphosphate pyrophosphatase (190 aa).

Residue D69 is the Proton acceptor of the active site.

Belongs to the Maf family. The cofactor is a divalent metal cation.

It localises to the cytoplasm. The catalysed reaction is a ribonucleoside 5'-triphosphate + H2O = a ribonucleoside 5'-phosphate + diphosphate + H(+). The enzyme catalyses a 2'-deoxyribonucleoside 5'-triphosphate + H2O = a 2'-deoxyribonucleoside 5'-phosphate + diphosphate + H(+). Its function is as follows. Nucleoside triphosphate pyrophosphatase. May have a dual role in cell division arrest and in preventing the incorporation of modified nucleotides into cellular nucleic acids. The polypeptide is Nucleoside triphosphate pyrophosphatase (Helicobacter pylori (strain ATCC 700392 / 26695) (Campylobacter pylori)).